The sequence spans 196 residues: MIDFDGYRPNVGIVICNRKGQVLWAKRCGQNSWQFPQGGINDNESAEQAMYRELHEEVGLQPKDVRLLYVSKHWLRYKLPKRLLRYDSKPMCIGQKQRWFLLQLVGDEKNINMKTTKSPEFDGWRWVSFWYPVRQVVSFKRDVYRKVMKEFASVLFTDNPPIFSASREANSQSNSANKKYSQTKYTKRHFYKSKGQ.

Positions 6-149 (GYRPNVGIVI…KRDVYRKVMK (144 aa)) constitute a Nudix hydrolase domain. The short motif at 38 to 59 (GGINDNESAEQAMYRELHEEVG) is the Nudix box element. The segment at 166–196 (SREANSQSNSANKKYSQTKYTKRHFYKSKGQ) is disordered. Residues 167–184 (REANSQSNSANKKYSQTK) show a composition bias toward polar residues. The segment covering 185 to 196 (YTKRHFYKSKGQ) has biased composition (basic residues).

It belongs to the Nudix hydrolase family. RppH subfamily. It depends on a divalent metal cation as a cofactor.

In terms of biological role, accelerates the degradation of transcripts by removing pyrophosphate from the 5'-end of triphosphorylated RNA, leading to a more labile monophosphorylated state that can stimulate subsequent ribonuclease cleavage. In Haemophilus influenzae (strain 86-028NP), this protein is RNA pyrophosphohydrolase.